The primary structure comprises 214 residues: Phosphatidylcholine transfer protein (214 aa).

The residue at position 1 (Met1) is an N-acetylmethionine. In terms of domain architecture, START spans 1-212 (MAGPAAHFSD…MVKACQNYHK (212 aa)). A 1,2-diacyl-sn-glycero-3-phosphocholine contacts are provided by Tyr72 and Arg78. The residue at position 139 (Ser139) is a Phosphoserine. Gln157 contacts a 1,2-diacyl-sn-glycero-3-phosphocholine.

As to quaternary structure, interacts with ACOT13/THEM2.

It is found in the cytoplasm. Lipid transfer protein that promotes intermembrane transfer of phosphatidylcholines but no other phospholipids. Binds a single lipid molecule. May play a role in hepatocellular selection and transport of phosphatidylcholines during bile formation. In Rattus norvegicus (Rat), this protein is Phosphatidylcholine transfer protein (Pctp).